The chain runs to 1585 residues: Maestro heat-like repeat-containing protein family member 2B (1585 aa).

15 HEAT repeats span residues 28 to 65, 228 to 263, 272 to 309, 310 to 346, 405 to 445, 531 to 569, 572 to 611, 662 to 699, 777 to 819, 964 to 1001, 1021 to 1059, 1112 to 1151, 1157 to 1195, 1258 to 1295, and 1363 to 1402; these read VNKEDIYSHLTSVIQNTDILDDAIVQRLIYYASKDMRD, GYALGQVPWLLNQYKDKEIDFHVTQSLKQILTAAVL, LRRSIFINLLQQICRAPEPPVKENEMKASSCFLILAHS, NPGELMEFFDEQVRSNNEAIRVGILTLLRLAVNADEP, TLNR…LVIG, IGLLKILPEIIHPKLVDLWKTRLPELLQPLEGKNISTVL, TMLLQLLKESLWKISDVAWTIQLTQDFKQQMGSYSNNSTE, ENHLDIVLKVLKTFQNQEKFFMNRCKSLFSGKKSLTKT, SYKE…LKPQ, HLEVERLQGLQEGLESDDVQVQIKISSKIAKIVSKFIP, PTCTKACGIWMITVLKQQGAALEDQLLEILGTIYHHMPV, ASSGKLLQALIDKLETELEDDIARVEAISVACAMYEVISM, GLYPELFTLLLKLVSCTLGQKMLTCPWSHRRHVMQQGEQ, GVILDIMEQLLSSLTSSSENYRITGAAFFSELMKEPIL, and CESLKALKKILELLTDRDVSFYFKEIVLQTRTFFEDEQDD.

In terms of assembly, found in a complex at least composed of MROH2B, PRKACA isoform 2 and TCP11. Interacts with PRKACA. Interacts with TCP11. Post-translationally, constitutively phosphorylated on serine and threonine residues in acrosomal region of the sperm head, midpiece and flagellar regions of noncapacitated spermatozoa. Phosphorylation on tyrosine residues increases upon sperm capacitation within the acrosomal and tail regions in a protein kinase A (PKA)-dependent signaling pathway.

The protein resides in the cytoplasm. It localises to the cytoplasmic vesicle. It is found in the secretory vesicle. The protein localises to the acrosome. Its subcellular location is the cell projection. The protein resides in the cilium. It localises to the flagellum. In terms of biological role, may play a role in the process of sperm capacitation. This Homo sapiens (Human) protein is Maestro heat-like repeat-containing protein family member 2B.